A 351-amino-acid chain; its full sequence is Probable galacturonosyltransferase-like 4 (351 aa).

Residues 1–8 (MASRSLSY) are Cytoplasmic-facing. A helical; Signal-anchor for type II membrane protein transmembrane segment spans residues 9-29 (TQLLGLLSFILLLVTTTTMAV). Residues 30-351 (RVGVILHKPS…YRSSRHSLEE (322 aa)) lie on the Lumenal side of the membrane. N-linked (GlcNAc...) asparagine glycans are attached at residues N96 and N203.

This sequence belongs to the glycosyltransferase 8 family.

It localises to the golgi apparatus membrane. It participates in glycan metabolism; pectin biosynthesis. In terms of biological role, may be involved in pectin and/or xylans biosynthesis in cell walls. The protein is Probable galacturonosyltransferase-like 4 (GATL4) of Arabidopsis thaliana (Mouse-ear cress).